The primary structure comprises 313 residues: tRNA dimethylallyltransferase (313 aa).

Residue 17–24 participates in ATP binding; that stretch reads GPTASGKT. 19 to 24 provides a ligand contact to substrate; the sequence is TASGKT. Interaction with substrate tRNA stretches follow at residues 42 to 45, 166 to 170, and 247 to 252; these read DSAL, QRLSR, and RCVGYR.

It belongs to the IPP transferase family. Monomer. Mg(2+) is required as a cofactor.

It catalyses the reaction adenosine(37) in tRNA + dimethylallyl diphosphate = N(6)-dimethylallyladenosine(37) in tRNA + diphosphate. Functionally, catalyzes the transfer of a dimethylallyl group onto the adenine at position 37 in tRNAs that read codons beginning with uridine, leading to the formation of N6-(dimethylallyl)adenosine (i(6)A). The chain is tRNA dimethylallyltransferase from Yersinia pseudotuberculosis serotype O:1b (strain IP 31758).